The chain runs to 120 residues: UPF0231 protein YacL (120 aa).

This sequence belongs to the UPF0231 family.

The protein is UPF0231 protein YacL of Escherichia coli O81 (strain ED1a).